Here is a 392-residue protein sequence, read N- to C-terminus: 8-amino-7-oxononanoate synthase (392 aa).

R26 contacts substrate. Pyridoxal 5'-phosphate is bound at residue 113 to 114 (GY). Substrate is bound at residue H138. Residues S186, H214, and T241 each contribute to the pyridoxal 5'-phosphate site. At K244 the chain carries N6-(pyridoxal phosphate)lysine. Residue T353 participates in substrate binding.

The protein belongs to the class-II pyridoxal-phosphate-dependent aminotransferase family. BioF subfamily. Homodimer. Pyridoxal 5'-phosphate serves as cofactor.

The enzyme catalyses 6-carboxyhexanoyl-[ACP] + L-alanine + H(+) = (8S)-8-amino-7-oxononanoate + holo-[ACP] + CO2. The protein operates within cofactor biosynthesis; biotin biosynthesis. Functionally, catalyzes the decarboxylative condensation of pimeloyl-[acyl-carrier protein] and L-alanine to produce 8-amino-7-oxononanoate (AON), [acyl-carrier protein], and carbon dioxide. The protein is 8-amino-7-oxononanoate synthase of Maricaulis maris (strain MCS10) (Caulobacter maris).